The sequence spans 368 residues: Queuine tRNA-ribosyltransferase (368 aa).

The Proton acceptor role is filled by D89. Substrate contacts are provided by residues 89–93 (DSGGF), D143, Q187, and G214. The Nucleophile role is filled by D264. Positions 269-273 (TRNAR) are RNA binding; important for wobble base 34 recognition. Zn(2+) is bound by residues C302, C304, C307, and H333.

The protein belongs to the queuine tRNA-ribosyltransferase family. Homodimer. Within each dimer, one monomer is responsible for RNA recognition and catalysis, while the other monomer binds to the replacement base PreQ1. Requires Zn(2+) as cofactor.

The catalysed reaction is 7-aminomethyl-7-carbaguanine + guanosine(34) in tRNA = 7-aminomethyl-7-carbaguanosine(34) in tRNA + guanine. Its pathway is tRNA modification; tRNA-queuosine biosynthesis. Catalyzes the base-exchange of a guanine (G) residue with the queuine precursor 7-aminomethyl-7-deazaguanine (PreQ1) at position 34 (anticodon wobble position) in tRNAs with GU(N) anticodons (tRNA-Asp, -Asn, -His and -Tyr). Catalysis occurs through a double-displacement mechanism. The nucleophile active site attacks the C1' of nucleotide 34 to detach the guanine base from the RNA, forming a covalent enzyme-RNA intermediate. The proton acceptor active site deprotonates the incoming PreQ1, allowing a nucleophilic attack on the C1' of the ribose to form the product. After dissociation, two additional enzymatic reactions on the tRNA convert PreQ1 to queuine (Q), resulting in the hypermodified nucleoside queuosine (7-(((4,5-cis-dihydroxy-2-cyclopenten-1-yl)amino)methyl)-7-deazaguanosine). The polypeptide is Queuine tRNA-ribosyltransferase (Blochmanniella pennsylvanica (strain BPEN)).